The following is a 483-amino-acid chain: Phloretin 2'-O-glucosyltransferase (483 aa).

Catalysis depends on His-15, which acts as the Proton acceptor. His-15 serves as a coordination point for an anthocyanidin. Asp-118 acts as the Charge relay in catalysis. UDP-alpha-D-glucose-binding residues include Thr-140, Ala-360, Gln-362, His-377, Trp-380, Asn-381, Ser-382, and Glu-385. Position 400 (Ala-400) interacts with an anthocyanidin. Residues Glu-401 and Gln-402 each contribute to the UDP-alpha-D-glucose site.

This sequence belongs to the UDP-glycosyltransferase family.

The catalysed reaction is phloretin + UDP-alpha-D-glucose = phlorizin + UDP + H(+). Functionally, glycosyltransferase that possesses phloretin 2'-O-glycosyltransferase activity. Converts phloretin to phlorizin (phloretin 2'-O-glucoside), a potent antioxidant. Is specific for phloretin and does not possess glycosyltransferase activity toward caffeic acid, catechin, chlorogenic acid, 2-coumaric acid, 3-coumaric acid, 4-coumaric acid, cyanidin, 3,4-dihydroxyhydrocinnamic acid, epicatechin, 3-hydroxybenzoic acid, naringenin, 3,4-dihydroxybenzoic acid, quercetin and rutin. Can glycosylate phloretin in the presence of UDP-glucose, UDP-xylose and UDP-galactose. The polypeptide is Phloretin 2'-O-glucosyltransferase (Malus domestica (Apple)).